The primary structure comprises 211 residues: 2,3-bisphosphoglycerate-dependent phosphoglycerate mutase (211 aa).

Residues 9–16, 22–23, R61, 88–91, K99, 115–116, and 159–160 each bind substrate; these read RHGQSDWN, TG, ERDY, RR, and GN. Catalysis depends on H10, which acts as the Tele-phosphohistidine intermediate. E88 functions as the Proton donor/acceptor in the catalytic mechanism.

Belongs to the phosphoglycerate mutase family. BPG-dependent PGAM subfamily. In terms of assembly, homodimer.

It catalyses the reaction (2R)-2-phosphoglycerate = (2R)-3-phosphoglycerate. It participates in carbohydrate degradation; glycolysis; pyruvate from D-glyceraldehyde 3-phosphate: step 3/5. Catalyzes the interconversion of 2-phosphoglycerate and 3-phosphoglycerate. This is 2,3-bisphosphoglycerate-dependent phosphoglycerate mutase from Rhizobium rhizogenes (strain K84 / ATCC BAA-868) (Agrobacterium radiobacter).